The primary structure comprises 410 residues: Bifunctional malic/malolactic enzyme (410 aa).

The Proton donor role is filled by tyrosine 36. Lysine 91 (proton acceptor) is an active-site residue. Glutamate 133, aspartate 134, and aspartate 159 together coordinate a divalent metal cation. NADP(+)-binding positions include alanine 192–alanine 195, asparagine 286, and asparagine 317.

The protein belongs to the malic enzymes family. Interacts with BrxC. Mg(2+) is required as a cofactor. Mn(2+) serves as cofactor.

The enzyme catalyses (S)-malate + NADP(+) = pyruvate + CO2 + NADPH. It catalyses the reaction oxaloacetate + H(+) = pyruvate + CO2. It carries out the reaction (S)-malate + H(+) = (S)-lactate + CO2. NADPH is a strong modulator that switches activity from a pyruvate-producing malic enzyme to a lactate-generating malolactic enzyme. Functionally, bifunctional enzyme with both malic and malolactic enzyme activities. In the absence of NADPH, catalyzes the reversible decarboxylation of malate to pyruvate. Can use NAD and NADP, but with a very strong preference for NADP. In the presence of excess NADPH, catalyzes the non-oxidative decarboxylation of malate to lactate. During growth on glucose, contributes to NADPH balancing via oxidation of the NADPH produced in excess by other enzymatic reactions. Can also catalyze the decarboxylation of oxaloacetate. This is Bifunctional malic/malolactic enzyme (ytsJ) from Bacillus subtilis (strain 168).